The primary structure comprises 461 residues: Cysteine--tRNA ligase (461 aa).

C29 contributes to the Zn(2+) binding site. Positions 31–41 match the 'HIGH' region motif; that stretch reads MTVYDFCHIGH. Positions 210, 235, and 239 each coordinate Zn(2+). A 'KMSKS' region motif is present at residues 267–271; sequence KMSKS. K270 contacts ATP.

The protein belongs to the class-I aminoacyl-tRNA synthetase family. As to quaternary structure, monomer. The cofactor is Zn(2+).

The protein resides in the cytoplasm. It carries out the reaction tRNA(Cys) + L-cysteine + ATP = L-cysteinyl-tRNA(Cys) + AMP + diphosphate. This chain is Cysteine--tRNA ligase, found in Stutzerimonas stutzeri (strain A1501) (Pseudomonas stutzeri).